The following is a 137-amino-acid chain: MPNFAGTWKMRSSENFDELLKALGVNAMLRKVAVAAASKPHVEIRQDGDQFYIKTSTTVRTTEINFKVGEGFEEETVDGRKCRSLATWENENKIHCTQTLLEGDGPKTYWTRELANDELILTFGADDVVCTRIYVRE.

Positions 21–31 match the Nuclear localization signal motif; the sequence is KALGVNAMLRK. 132-134 serves as a coordination point for all-trans-retinoate; it reads RIY.

The protein belongs to the calycin superfamily. Fatty-acid binding protein (FABP) family.

The protein localises to the cytoplasm. Functionally, cytosolic CRABPs may regulate the access of retinoic acid to the nuclear retinoic acid receptors. The polypeptide is Cellular retinoic acid-binding protein 1 (CRABP1) (Homo sapiens (Human)).